Reading from the N-terminus, the 276-residue chain is Dermonecrotic toxin LlSicTox-alphaIV1i (276 aa).

His5 is a catalytic residue. Mg(2+) is bound by residues Glu25 and Asp27. The active-site Nucleophile is the His41. Intrachain disulfides connect Cys45–Cys51 and Cys47–Cys193. Asp85 is a Mg(2+) binding site.

The protein belongs to the arthropod phospholipase D family. Class II subfamily. Mg(2+) serves as cofactor. In terms of tissue distribution, expressed by the venom gland.

It localises to the secreted. It carries out the reaction an N-(acyl)-sphingosylphosphocholine = an N-(acyl)-sphingosyl-1,3-cyclic phosphate + choline. It catalyses the reaction an N-(acyl)-sphingosylphosphoethanolamine = an N-(acyl)-sphingosyl-1,3-cyclic phosphate + ethanolamine. The enzyme catalyses a 1-acyl-sn-glycero-3-phosphocholine = a 1-acyl-sn-glycero-2,3-cyclic phosphate + choline. The catalysed reaction is a 1-acyl-sn-glycero-3-phosphoethanolamine = a 1-acyl-sn-glycero-2,3-cyclic phosphate + ethanolamine. Dermonecrotic toxins cleave the phosphodiester linkage between the phosphate and headgroup of certain phospholipids (sphingolipid and lysolipid substrates), forming an alcohol (often choline) and a cyclic phosphate. This toxin acts on sphingomyelin (SM). It may also act on ceramide phosphoethanolamine (CPE), lysophosphatidylcholine (LPC) and lysophosphatidylethanolamine (LPE), but not on lysophosphatidylserine (LPS), and lysophosphatidylglycerol (LPG). It acts by transphosphatidylation, releasing exclusively cyclic phosphate products as second products. Induces dermonecrosis, hemolysis, increased vascular permeability, edema, inflammatory response, and platelet aggregation. The polypeptide is Dermonecrotic toxin LlSicTox-alphaIV1i (Loxosceles laeta (South American recluse spider)).